We begin with the raw amino-acid sequence, 219 residues long: Cytidylate kinase (219 aa).

10 to 18 (GPAAAGKST) is an ATP binding site.

Belongs to the cytidylate kinase family. Type 1 subfamily.

It is found in the cytoplasm. It catalyses the reaction CMP + ATP = CDP + ADP. The catalysed reaction is dCMP + ATP = dCDP + ADP. The polypeptide is Cytidylate kinase (Staphylococcus aureus (strain bovine RF122 / ET3-1)).